Consider the following 184-residue polypeptide: Large ribosomal subunit protein uL18 (184 aa).

The protein belongs to the universal ribosomal protein uL18 family. As to quaternary structure, part of the 50S ribosomal subunit. Contacts the 5S and 23S rRNAs.

Its function is as follows. This is one of the proteins that bind and probably mediate the attachment of the 5S RNA into the large ribosomal subunit, where it forms part of the central protuberance. This Haloferax volcanii (strain ATCC 29605 / DSM 3757 / JCM 8879 / NBRC 14742 / NCIMB 2012 / VKM B-1768 / DS2) (Halobacterium volcanii) protein is Large ribosomal subunit protein uL18 (rpl18).